We begin with the raw amino-acid sequence, 89 residues long: Small ribosomal subunit protein bS20 (89 aa).

It belongs to the bacterial ribosomal protein bS20 family.

Its function is as follows. Binds directly to 16S ribosomal RNA. This is Small ribosomal subunit protein bS20 from Wolbachia pipientis subsp. Culex pipiens (strain wPip).